The sequence spans 205 residues: MPAYNPSARFDKAPFHSSLFQYCVIPKRLGVSGRRQVRNHMSIDNYVIGDQVELHEATSSKVKKVSSNHRTRFTQGVTMRILITGGTGFVGFQLIKLLSSHELLVLTRDLTKAAQRFAHIPSQNLQLLSPLDELSDFNGIDAIINLRPDNRLPINAEEKPKAGIARSRLDITEQLVEKIRASAHPPAVFLSGSAWFLCDQQAACL.

This sequence belongs to the NAD(P)-dependent epimerase/dehydratase family.

This is Protein Rcp (rcp) from Vibrio cholerae serotype O1 (strain ATCC 39315 / El Tor Inaba N16961).